The chain runs to 328 residues: Peroxisomal adenine nucleotide transporter 1 (328 aa).

6 helical membrane passes run 1-21 (MLTL…NIAV), 78-98 (TVTT…YTFI), 128-148 (LVLG…MAVV), 185-202 (LRTG…YASF), 226-246 (FILG…LIVA), and 277-297 (WKGV…LFAF). Solcar repeat units follow at residues 1 to 101 (MLTL…IRKS), 122 to 208 (PSTI…LKEV), and 220 to 304 (LSAV…LTKS).

This sequence belongs to the mitochondrial carrier (TC 2.A.29) family.

The protein resides in the peroxisome membrane. Functionally, adenine nucleotide transporter involved in the uniport of ATP and adenine nucleotide hetero-exchange transport between the cytosol and the peroxisomal lumen. This transport is accompanied by a proton transport from the peroxisomal lumen to the cytosol. Transport of ATP into the peroxisome is required for beta-oxidation of medium-chain fatty acids. Required for growth on medium-chain fatty acids, pH gradient formation in peroxisomes and for normal peroxisome proliferation. This is Peroxisomal adenine nucleotide transporter 1 (ANT1) from Saccharomyces cerevisiae (strain ATCC 204508 / S288c) (Baker's yeast).